A 145-amino-acid chain; its full sequence is Ribosomal RNA large subunit methyltransferase H (145 aa).

S-adenosyl-L-methionine-binding positions include Leu-64, Gly-93, and Leu-112–Phe-117.

It belongs to the RNA methyltransferase RlmH family. As to quaternary structure, homodimer.

It localises to the cytoplasm. The catalysed reaction is pseudouridine(1915) in 23S rRNA + S-adenosyl-L-methionine = N(3)-methylpseudouridine(1915) in 23S rRNA + S-adenosyl-L-homocysteine + H(+). Specifically methylates the pseudouridine at position 1915 (m3Psi1915) in 23S rRNA. The chain is Ribosomal RNA large subunit methyltransferase H from Prochlorococcus marinus (strain NATL1A).